The sequence spans 294 residues: Glycine N-acyltransferase-like protein 2 (294 aa).

Position 19 is an N6-acetyllysine (lysine 19).

Belongs to the glycine N-acyltransferase family. Post-translationally, acetylation at Lys-19 drastically decreases the production of N-oleoyl and N-arachidonoyl glycines. As to expression, expressed at highest levels in salivary gland and trachea. Also detected in thyroid gland, spinal cord, prostate, lung and fetal brain.

The protein localises to the endoplasmic reticulum. The enzyme catalyses an acyl-CoA + glycine = an N-acylglycine + CoA + H(+). It carries out the reaction (9Z)-hexadecenoyl-CoA + glycine = N-(9Z-hexadecenoyl)-glycine + CoA + H(+). The catalysed reaction is octadecanoyl-CoA + glycine = N-octadecanoylglycine + CoA + H(+). It catalyses the reaction (5Z,8Z,11Z,14Z)-eicosatetraenoyl-CoA + glycine = N-(5Z,8Z,11Z,14Z)-eicosatetraenoyl-glycine + CoA + H(+). The enzyme catalyses (9Z)-octadecenoyl-CoA + glycine = N-(9Z-octadecenoyl)glycine + CoA + H(+). It carries out the reaction octanoyl-CoA + glycine = N-octanoylglycine + CoA + H(+). The catalysed reaction is decanoyl-CoA + glycine = N-decanoylglycine + CoA + H(+). It catalyses the reaction tetradecanoyl-CoA + glycine = N-tetradecanoylglycine + CoA + H(+). The enzyme catalyses dodecanoyl-CoA + glycine = N-dodecanoylglycine + CoA + H(+). It carries out the reaction (9Z,12Z)-octadecadienoyl-CoA + glycine = N-(9Z,12Z-octadecadienoyl)-glycine + CoA + H(+). The catalysed reaction is a fatty acyl-CoA + glycine = an N-(fatty acyl)-glycine + CoA + H(+). Mitochondrial acyltransferase which transfers the acyl group to the N-terminus of glycine. Conjugates numerous substrates, such as arachidonoyl-CoA and saturated medium and long-chain acyl-CoAs ranging from chain-length C8:0-CoA to C18:0-CoA, to form a variety of N-acylglycines. Shows a preference for monounsaturated fatty acid oleoyl-CoA (C18:1-CoA) as an acyl donor. Does not exhibit any activity toward C22:6-CoA and chenodeoxycholoyl-CoA, nor toward serine or alanine. In Homo sapiens (Human), this protein is Glycine N-acyltransferase-like protein 2.